We begin with the raw amino-acid sequence, 375 residues long: Chaperone protein DnaJ (375 aa).

One can recognise a J domain in the interval 4–68; that stretch reads DYYEVLGVGK…QKRAQYDRFG (65 aa). The segment at 129–211 adopts a CR-type zinc-finger fold; that stretch reads GKETDVEIPK…CRGSGRVKVR (83 aa). Residues cysteine 142, cysteine 145, cysteine 159, cysteine 162, cysteine 185, cysteine 188, cysteine 199, and cysteine 202 each coordinate Zn(2+). 4 CXXCXGXG motif repeats span residues 142–149, 159–166, 185–192, and 199–206; these read CDTCHGSG, CKTCSGTG, CTTCEGKG, and CSSCRGSG. The segment at 349-375 is disordered; it reads LSGEKPGQHGGEDEGFFEKMKRAFRGE.

This sequence belongs to the DnaJ family. In terms of assembly, homodimer. It depends on Zn(2+) as a cofactor.

It is found in the cytoplasm. Participates actively in the response to hyperosmotic and heat shock by preventing the aggregation of stress-denatured proteins and by disaggregating proteins, also in an autonomous, DnaK-independent fashion. Unfolded proteins bind initially to DnaJ; upon interaction with the DnaJ-bound protein, DnaK hydrolyzes its bound ATP, resulting in the formation of a stable complex. GrpE releases ADP from DnaK; ATP binding to DnaK triggers the release of the substrate protein, thus completing the reaction cycle. Several rounds of ATP-dependent interactions between DnaJ, DnaK and GrpE are required for fully efficient folding. Also involved, together with DnaK and GrpE, in the DNA replication of plasmids through activation of initiation proteins. This Brevibacillus choshinensis protein is Chaperone protein DnaJ.